The chain runs to 214 residues: Large ribosomal subunit protein uL3 (214 aa).

Glutamine 151 carries the N5-methylglutamine modification.

This sequence belongs to the universal ribosomal protein uL3 family. As to quaternary structure, part of the 50S ribosomal subunit. Forms a cluster with proteins L14 and L19. Methylated by PrmB.

In terms of biological role, one of the primary rRNA binding proteins, it binds directly near the 3'-end of the 23S rRNA, where it nucleates assembly of the 50S subunit. This chain is Large ribosomal subunit protein uL3, found in Saccharophagus degradans (strain 2-40 / ATCC 43961 / DSM 17024).